Reading from the N-terminus, the 281-residue chain is Nucleotide-binding protein Tpet_1006 (281 aa).

9 to 16 (GLSGAGKT) contacts ATP. 58–61 (DVRS) lines the GTP pocket.

The protein belongs to the RapZ-like family.

Its function is as follows. Displays ATPase and GTPase activities. The chain is Nucleotide-binding protein Tpet_1006 from Thermotoga petrophila (strain ATCC BAA-488 / DSM 13995 / JCM 10881 / RKU-1).